The following is a 384-amino-acid chain: Chaperone protein DnaJ (384 aa).

One can recognise a J domain in the interval 4–68 (DFYDVLGVSR…EKRQMYDQLG (65 aa)). 2 disordered regions span residues 74–105 (QAQK…GMGG) and 113–132 (NNLF…QGRD). Residues 79–105 (GAGGGGGGRGQGNPFGGGGNPFGGMGG) show a composition bias toward gly residues. Residues 147–229 (GVERDVTIRR…CRGSGRVRRT (83 aa)) form a CR-type zinc finger. Zn(2+) contacts are provided by Cys160, Cys163, Cys177, Cys180, Cys203, Cys206, Cys217, and Cys220. 4 CXXCXGXG motif repeats span residues 160-167 (CPECDGEG), 177-184 (CSECNGSG), 203-210 (CRACGGEG), and 217-224 (CSECRGSG).

This sequence belongs to the DnaJ family. Homodimer. Zn(2+) serves as cofactor.

Its subcellular location is the cytoplasm. Functionally, participates actively in the response to hyperosmotic and heat shock by preventing the aggregation of stress-denatured proteins and by disaggregating proteins, also in an autonomous, DnaK-independent fashion. Unfolded proteins bind initially to DnaJ; upon interaction with the DnaJ-bound protein, DnaK hydrolyzes its bound ATP, resulting in the formation of a stable complex. GrpE releases ADP from DnaK; ATP binding to DnaK triggers the release of the substrate protein, thus completing the reaction cycle. Several rounds of ATP-dependent interactions between DnaJ, DnaK and GrpE are required for fully efficient folding. Also involved, together with DnaK and GrpE, in the DNA replication of plasmids through activation of initiation proteins. The protein is Chaperone protein DnaJ of Haloferax mediterranei (strain ATCC 33500 / DSM 1411 / JCM 8866 / NBRC 14739 / NCIMB 2177 / R-4) (Halobacterium mediterranei).